Reading from the N-terminus, the 62-residue chain is Sperm protamine P1 (62 aa).

The disordered stretch occupies residues 1-62 (MARYRHSXSR…RYSRRRRRRY (62 aa)).

This sequence belongs to the protamine P1 family. As to expression, testis.

It localises to the nucleus. Its subcellular location is the chromosome. Protamines substitute for histones in the chromatin of sperm during the haploid phase of spermatogenesis. They compact sperm DNA into a highly condensed, stable and inactive complex. The sequence is that of Sperm protamine P1 (PRM1) from Petrogale xanthopus (Yellow-footed rock wallaby).